The chain runs to 983 residues: 3',5'-cyclic-AMP phosphodiesterase, isoforms N/G (983 aa).

Disordered regions lie at residues 31 to 333 (MPEG…SAGL), 349 to 370 (SDSD…ASES), 400 to 429 (VPAS…LSQG), and 528 to 566 (SAGQ…RLPT). Over residues 35–50 (GEDHRGDLNQKGENNN) the composition is skewed to basic and acidic residues. The span at 51-60 (RPRPSISLAN) shows a compositional bias: polar residues. A compositionally biased stretch (gly residues) spans 84–97 (SVGGGDSDGGGEAI). 2 stretches are compositionally biased toward low complexity: residues 112 to 121 (LSTTTSNSSS) and 145 to 167 (QLQQ…SQRS). A compositionally biased stretch (acidic residues) spans 174–199 (AEGEEFDVDPMDEDDEDQTYDRETEE). 2 stretches are compositionally biased toward low complexity: residues 219-234 (SSLF…TTSS) and 248-261 (AASI…SDLM). Polar residues-rich tracts occupy residues 268–287 (STAT…SQRR), 358–368 (KSMSRNSSIAS), and 401–419 (PASN…SRSG). Residues 569–898 (VETPRENELG…DYYQSMIPPS (330 aa)) form the PDEase domain. Residue His645 is the Proton donor of the active site. 645–649 (HNSLH) serves as a coordination point for 3',5'-cyclic AMP. A divalent metal cation-binding residues include His649, His685, Asp686, and Asp803. Asp686, Asp803, and Gln854 together coordinate 3',5'-cyclic AMP. Residues 920 to 937 (EESDQENLAELEEGDESG) are compositionally biased toward acidic residues. Positions 920–983 (EESDQENLAE…CQNQPQHGGM (64 aa)) are disordered. The span at 938 to 955 (GESTTTGTTGTTAASALS) shows a compositional bias: low complexity. Residues 956 to 967 (GAGGGGGGGGGM) are compositionally biased toward gly residues. Over residues 973-983 (GCQNQPQHGGM) the composition is skewed to polar residues.

It belongs to the cyclic nucleotide phosphodiesterase family. PDE4 subfamily. In terms of assembly, monomer. A divalent metal cation serves as cofactor.

The enzyme catalyses 3',5'-cyclic AMP + H2O = AMP + H(+). Its pathway is purine metabolism; 3',5'-cyclic AMP degradation; AMP from 3',5'-cyclic AMP: step 1/1. In terms of biological role, hydrolyzes the second messenger cAMP, which is a key regulator of many important physiological processes. Vital for female fertility. Required for learning/memory. This is 3',5'-cyclic-AMP phosphodiesterase, isoforms N/G from Drosophila melanogaster (Fruit fly).